A 179-amino-acid polypeptide reads, in one-letter code: Large ribosomal subunit protein uL6 (179 aa).

The protein belongs to the universal ribosomal protein uL6 family. In terms of assembly, part of the 50S ribosomal subunit.

Its function is as follows. This protein binds to the 23S rRNA, and is important in its secondary structure. It is located near the subunit interface in the base of the L7/L12 stalk, and near the tRNA binding site of the peptidyltransferase center. This chain is Large ribosomal subunit protein uL6, found in Mycobacterium leprae (strain Br4923).